A 318-amino-acid polypeptide reads, in one-letter code: Ribosomal RNA small subunit methyltransferase H (318 aa).

S-adenosyl-L-methionine-binding positions include 34–36 (GGH), Asp53, Phe82, Asp103, and Gln110.

The protein belongs to the methyltransferase superfamily. RsmH family.

It localises to the cytoplasm. It catalyses the reaction cytidine(1402) in 16S rRNA + S-adenosyl-L-methionine = N(4)-methylcytidine(1402) in 16S rRNA + S-adenosyl-L-homocysteine + H(+). Functionally, specifically methylates the N4 position of cytidine in position 1402 (C1402) of 16S rRNA. The polypeptide is Ribosomal RNA small subunit methyltransferase H (Limosilactobacillus reuteri (strain DSM 20016) (Lactobacillus reuteri)).